We begin with the raw amino-acid sequence, 347 residues long: Protein-glutamate methylesterase/protein-glutamine glutaminase 4 (347 aa).

The region spanning 3-121 is the Response regulatory domain; the sequence is KVLIVDDSAS…HPNHEREARS (119 aa). Asp54 carries the 4-aspartylphosphate modification. The 186-residue stretch at 157–342 folds into the CheB-type methylesterase domain; sequence PARLKAVAIG…PDRIVTALTS (186 aa). Catalysis depends on residues Ser168, His195, and Asp289.

It belongs to the CheB family. Post-translationally, phosphorylated by CheA. Phosphorylation of the N-terminal regulatory domain activates the methylesterase activity.

It is found in the cytoplasm. The catalysed reaction is [protein]-L-glutamate 5-O-methyl ester + H2O = L-glutamyl-[protein] + methanol + H(+). It carries out the reaction L-glutaminyl-[protein] + H2O = L-glutamyl-[protein] + NH4(+). Functionally, involved in chemotaxis. Part of a chemotaxis signal transduction system that modulates chemotaxis in response to various stimuli. Catalyzes the demethylation of specific methylglutamate residues introduced into the chemoreceptors (methyl-accepting chemotaxis proteins or MCP) by CheR. Also mediates the irreversible deamidation of specific glutamine residues to glutamic acid. In Geobacter metallireducens (strain ATCC 53774 / DSM 7210 / GS-15), this protein is Protein-glutamate methylesterase/protein-glutamine glutaminase 4.